Reading from the N-terminus, the 71-residue chain is Cytochrome c oxidase subunit 7, mitochondrial (71 aa).

The Mitochondrial matrix portion of the chain corresponds to 1–35; it reads MPGLVNAPNHVPEKQRYYQQAFKNHTRLWKIGPRS. The chain crosses the membrane as a helical span at residues 36–58; the sequence is GIIMTTFNIAMWGTFGASMYAMS. The Mitochondrial intermembrane segment spans residues 59–71; that stretch reads RKVLGYNTWFSED.

Belongs to the cytochrome c oxidase VIIa family. As to quaternary structure, component of the cytochrome c oxidase (complex IV, CIV), a multisubunit enzyme composed of 11 subunits. The complex is composed of a catalytic core of 3 subunits Cox1, Cox2 and Cox3, encoded in the mitochondrial DNA, and 8 supernumerary subunits Cox4, Cox5a/Cox5, Cox6, Cox7, Cox8, Cox7a/Cox9, Cox6b/Cox12 and Cox6a/Cox13, which are encoded in the nuclear genome. The complex exists as a monomer or a dimer and forms respiratory supercomplexes (SCs) in the inner mitochondrial membrane with NADH-ubiquinone oxidoreductase (complex I, CI) and ubiquinol-cytochrome c oxidoreductase (cytochrome b-c1 complex, complex III, CIII), resulting in various different assemblies (supercomplexes I(1)IV(1), I(1)III(3)IV(2), III(2)IV(1) and III(2)IV(2) as well as larger supercomplexes of compositions like I(1)III(2)IV(5-6)).

The protein resides in the mitochondrion inner membrane. It functions in the pathway energy metabolism; oxidative phosphorylation. Component of the cytochrome c oxidase, the last enzyme in the mitochondrial electron transport chain which drives oxidative phosphorylation. The respiratory chain contains 3 multisubunit complexes succinate dehydrogenase (complex II, CII), ubiquinol-cytochrome c oxidoreductase (cytochrome b-c1 complex, complex III, CIII) and cytochrome c oxidase (complex IV, CIV), that cooperate to transfer electrons derived from NADH and succinate to molecular oxygen, creating an electrochemical gradient over the inner membrane that drives transmembrane transport and the ATP synthase. Cytochrome c oxidase is the component of the respiratory chain that catalyzes the reduction of oxygen to water. Electrons originating from reduced cytochrome c in the intermembrane space (IMS) are transferred via the dinuclear copper A center (CU(A)) of Cox2 and heme A of Cox1 to the active site in Cox1, a binuclear center (BNC) formed by heme A3 and copper B (CU(B)). The BNC reduces molecular oxygen to 2 water molecules using 4 electrons from cytochrome c in the IMS and 4 protons from the mitochondrial matrix. This is Cytochrome c oxidase subunit 7, mitochondrial from Neurospora crassa (strain ATCC 24698 / 74-OR23-1A / CBS 708.71 / DSM 1257 / FGSC 987).